Reading from the N-terminus, the 384-residue chain is FAD-dependent urate hydroxylase (384 aa).

Residues G11, 30 to 31, S43, and V125 contribute to the FAD site; that span reads EA. Substrate-binding positions include N178, R204, and 216-218; that span reads YFF. FAD is bound by residues D285 and 295-299; that span reads GQGGC.

It belongs to the FAD-dependent urate hydroxylase family. In terms of assembly, monomer. FAD is required as a cofactor.

It catalyses the reaction urate + NADH + O2 + H(+) = 5-hydroxyisourate + NAD(+) + H2O. Its pathway is purine metabolism; urate degradation. Its function is as follows. Catalyzes the hydroxylation of urate to 5-hydroxyisourate (HIU). The sequence is that of FAD-dependent urate hydroxylase from Klebsiella pneumoniae subsp. pneumoniae (strain ATCC 700721 / MGH 78578).